Consider the following 177-residue polypeptide: uncharacterized protein (177 aa).

It to B.subtilis YutG.

This is an uncharacterized protein from Bacillus subtilis (strain 168).